Reading from the N-terminus, the 189-residue chain is T cell receptor gamma constant 2 (189 aa).

An Ig-like domain is found at 10 to 104 (PKPTIFLPSI…NKNGIDQEII (95 aa)). A disulfide bridge connects residues Cys32 and Cys88. N-linked (GlcNAc...) asparagine glycosylation is found at Asn66, Asn120, Asn136, Asn142, and Asn151. A helical transmembrane segment spans residues 155–177 (YYTYLLLLLKSVVYFAIITCCLL).

In terms of assembly, gamma-delta TR is a heterodimer composed of a gamma and delta chain; disulfide-linked. The gamma-delta TR is associated with the transmembrane signaling CD3 coreceptor proteins following the stoichiometry: a single gamma-delta TR heterodimer associates with one CD3D-CD3E heterodimer, one CD3G-CD3E heterodimer and one CD247 homodimer forming a stable octameric structure. Upon activation, gamma-delta TR complex associates with FCER1G to initiate intracellular signaling.

The protein localises to the cell membrane. Its function is as follows. Constant region of T cell receptor (TR) gamma chain that participates in the antigen recognition. Gamma-delta TRs recognize a variety of self and foreign non-peptide antigens frequently expressed at the epithelial boundaries between the host and external environment, including endogenous lipids presented by MH-like protein CD1D and phosphoantigens presented by butyrophilin-like molecule BTN3A1. Upon antigen recognition induces rapid, innate-like immune responses involved in pathogen clearance and tissue repair. Binding of gamma-delta TR complex to antigen triggers phosphorylation of immunoreceptor tyrosine-based activation motifs (ITAMs) in the CD3 chains by the LCK and FYN kinases, allowing the recruitment, phosphorylation, and activation of ZAP70 that facilitates phosphorylation of the scaffolding proteins LCP2 and LAT. This lead to the formation of a supramolecular signalosome that recruits the phospholipase PLCG1, resulting in calcium mobilization and ERK activation, ultimately leading to T cell expansion and differentiation into effector cells. Gamma-delta TRs are produced through somatic rearrangement of a limited repertoire of variable (V), diversity (D), and joining (J) genes. The potential diversity of gamma-delta TRs is conferred by the unique ability to rearrange (D) genes in tandem and to utilize all three reading frames. The combinatorial diversity is considerably increased by the sequence exonuclease trimming and random nucleotide (N) region additions which occur during the V-(D)-J rearrangements. The protein is T cell receptor gamma constant 2 of Homo sapiens (Human).